We begin with the raw amino-acid sequence, 183 residues long: ATP-dependent protease subunit HslV (183 aa).

T7 is a catalytic residue. Positions 162, 165, and 168 each coordinate Na(+).

This sequence belongs to the peptidase T1B family. HslV subfamily. A double ring-shaped homohexamer of HslV is capped on each side by a ring-shaped HslU homohexamer. The assembly of the HslU/HslV complex is dependent on binding of ATP.

It localises to the cytoplasm. It catalyses the reaction ATP-dependent cleavage of peptide bonds with broad specificity.. With respect to regulation, allosterically activated by HslU binding. Its function is as follows. Protease subunit of a proteasome-like degradation complex believed to be a general protein degrading machinery. This is ATP-dependent protease subunit HslV from Alkalilimnicola ehrlichii (strain ATCC BAA-1101 / DSM 17681 / MLHE-1).